The sequence spans 551 residues: Formate--tetrahydrofolate ligase (551 aa).

54–61 (TPPGEGKT) serves as a coordination point for ATP.

It belongs to the formate--tetrahydrofolate ligase family.

The catalysed reaction is (6S)-5,6,7,8-tetrahydrofolate + formate + ATP = (6R)-10-formyltetrahydrofolate + ADP + phosphate. The protein operates within one-carbon metabolism; tetrahydrofolate interconversion. The protein is Formate--tetrahydrofolate ligase of Myxococcus xanthus (strain DK1622).